The sequence spans 240 residues: Endo-chitosanase B (240 aa).

An N-terminal signal peptide occupies residues 1–17; it reads MRLSEILAVALVTGATA. The N-linked (GlcNAc...) asparagine glycan is linked to Asn-86.

This sequence belongs to the glycosyl hydrolase 75 family.

It localises to the secreted. The catalysed reaction is Endohydrolysis of beta-(1-&gt;4)-linkages between D-glucosamine residues in a partly acetylated chitosan.. Chitosanase catalyzing the endo-type cleavage of chitosan, the deacylated form of chitin. Chitosanase may be crucial in the degradation of the deacetylated portion of chitin in the fungal cell wall. Chitoolisaccharides produced by the hydrolysis of partially N-acetylated chitosan are known to have many biological activities, including antibacterial activity, immune-enhancing effects, and elicitor activity. This is Endo-chitosanase B (csnB) from Aspergillus oryzae (Yellow koji mold).